The primary structure comprises 311 residues: Aspartate carbamoyltransferase catalytic subunit (311 aa).

Carbamoyl phosphate-binding residues include arginine 57 and threonine 58. Lysine 86 serves as a coordination point for L-aspartate. Carbamoyl phosphate is bound by residues arginine 107, histidine 135, and glutamine 138. The L-aspartate site is built by arginine 168 and arginine 230. 2 residues coordinate carbamoyl phosphate: leucine 269 and proline 270.

It belongs to the aspartate/ornithine carbamoyltransferase superfamily. ATCase family. As to quaternary structure, heterooligomer of catalytic and regulatory chains.

It catalyses the reaction carbamoyl phosphate + L-aspartate = N-carbamoyl-L-aspartate + phosphate + H(+). It functions in the pathway pyrimidine metabolism; UMP biosynthesis via de novo pathway; (S)-dihydroorotate from bicarbonate: step 2/3. Functionally, catalyzes the condensation of carbamoyl phosphate and aspartate to form carbamoyl aspartate and inorganic phosphate, the committed step in the de novo pyrimidine nucleotide biosynthesis pathway. The protein is Aspartate carbamoyltransferase catalytic subunit of Staphylothermus marinus (strain ATCC 43588 / DSM 3639 / JCM 9404 / F1).